Consider the following 278-residue polypeptide: HAUS augmin-like complex subunit 1 (278 aa).

Coiled coils occupy residues R49–S79, S124–N177, and S249–E277.

It belongs to the HAUS1 family. As to quaternary structure, component of the HAUS augmin-like complex. The complex interacts with the gamma-tubulin ring complex and this interaction is required for spindle assembly. Associates with microtubules. The interaction with microtubules is strong during mitosis, while it is weak or absent during interphase. It is unclear whether this interaction is direct or indirect. Interacts with EML3 (phosphorylated at 'Thr-881'). In terms of tissue distribution, widely expressed. Expressed in pancreas, kidney, skeletal muscle, liver and heart. Weakly expressed in lung, brain and placenta.

The protein resides in the cytoplasm. It localises to the cytoskeleton. Its subcellular location is the microtubule organizing center. The protein localises to the centrosome. It is found in the spindle. The protein resides in the spindle pole. Contributes to mitotic spindle assembly, maintenance of centrosome integrity and completion of cytokinesis as part of the HAUS augmin-like complex. The polypeptide is HAUS augmin-like complex subunit 1 (HAUS1) (Homo sapiens (Human)).